A 258-amino-acid chain; its full sequence is Transcription cofactor vestigial-like protein 1 (258 aa).

2 stretches are compositionally biased toward polar residues: residues 55 to 65 (PQELTPSSQSE) and 74 to 87 (SMSPNQWRYSSPWT). The tract at residues 55 to 93 (PQELTPSSQSEGVMLKNDDSMSPNQWRYSSPWTKPQPEV) is disordered.

This sequence belongs to the vestigial family. Interacts with TEFs.

Its subcellular location is the nucleus. May act as a specific coactivator for the mammalian TEFs. The protein is Transcription cofactor vestigial-like protein 1 (VGLL1) of Homo sapiens (Human).